A 396-amino-acid chain; its full sequence is Pyridinium-3,5-bisthiocarboxylic acid mononucleotide nickel insertion protein (396 aa).

This sequence belongs to the LarC family.

It catalyses the reaction Ni(II)-pyridinium-3,5-bisthiocarboxylate mononucleotide = pyridinium-3,5-bisthiocarboxylate mononucleotide + Ni(2+). Involved in the biosynthesis of a nickel-pincer cofactor ((SCS)Ni(II) pincer complex). Binds Ni(2+), and functions in nickel delivery to pyridinium-3,5-bisthiocarboxylic acid mononucleotide (P2TMN), to form the mature cofactor. Is thus probably required for the activation of nickel-pincer cofactor-dependent enzymes. This is Pyridinium-3,5-bisthiocarboxylic acid mononucleotide nickel insertion protein from Moorella thermoacetica (strain ATCC 39073 / JCM 9320).